A 526-amino-acid polypeptide reads, in one-letter code: 3-hydroxy-3-methylglutaryl-coenzyme A reductase 2 (526 aa).

Catalysis depends on charge relay system residues glutamate 193, lysine 325, and aspartate 401. Residue histidine 499 is the Proton donor of the active site. The segment at 503–526 (NRKTEAPAPQADTISMTHNLPHSD) is disordered. Over residues 514-526 (DTISMTHNLPHSD) the composition is skewed to polar residues.

This sequence belongs to the HMG-CoA reductase family.

The enzyme catalyses (R)-mevalonate + 2 NADP(+) + CoA = (3S)-3-hydroxy-3-methylglutaryl-CoA + 2 NADPH + 2 H(+). Its pathway is metabolic intermediate biosynthesis; (R)-mevalonate biosynthesis; (R)-mevalonate from acetyl-CoA: step 3/3. Its function is as follows. This transmembrane glycoprotein is involved in the control of cholesterol biosynthesis. It is the rate-limiting enzyme of the sterol biosynthesis. This is 3-hydroxy-3-methylglutaryl-coenzyme A reductase 2 (hmgB) from Dictyostelium discoideum (Social amoeba).